The following is a 78-amino-acid chain: Signal peptidase complex subunit 1 (78 aa).

Residues 1-18 lie on the Cytoplasmic side of the membrane; sequence MNYLEGTIDFAGQLRCQK. The chain crosses the membrane as a helical span at residues 19–38; that stretch reads YMNYGLCTSAVISYIYGYLV. Residues 39-42 lie on the Lumenal side of the membrane; sequence QDSY. A helical transmembrane segment spans residues 43–63; it reads CVIKLFLILASLVALVCLPAW. Residues 64–78 lie on the Cytoplasmic side of the membrane; that stretch reads SMYNKNPLKFQKKKE.

This sequence belongs to the SPCS1 family. In terms of assembly, component of the signal peptidase complex (SPC) composed of a catalytic subunit sec11 and three accessory subunits spc1, spc2 and spc3. The complex induces a local thinning of the ER membrane which is used to measure the length of the signal peptide (SP) h-region of protein substrates. This ensures the selectivity of the complex towards h-regions shorter than 18-20 amino acids. SPC associates with the translocon complex.

The protein localises to the endoplasmic reticulum membrane. Functionally, component of the signal peptidase complex (SPC) which catalyzes the cleavage of N-terminal signal sequences from nascent proteins as they are translocated into the lumen of the endoplasmic reticulum. Dispensable for SPC enzymatic activity. This Schizosaccharomyces pombe (strain 972 / ATCC 24843) (Fission yeast) protein is Signal peptidase complex subunit 1.